The primary structure comprises 126 residues: Small ribosomal subunit protein uS12 (126 aa).

The segment at 1–26 (MPTINQLVRKGRASETTKSKSPALQD) is disordered. D89 is subject to 3-methylthioaspartic acid. The interval 103-126 (DTQGVKDRKQARSKYGAKRAKAGK) is disordered. The span at 113–126 (ARSKYGAKRAKAGK) shows a compositional bias: basic residues.

The protein belongs to the universal ribosomal protein uS12 family. In terms of assembly, part of the 30S ribosomal subunit. Contacts proteins S8 and S17. May interact with IF1 in the 30S initiation complex.

In terms of biological role, with S4 and S5 plays an important role in translational accuracy. Its function is as follows. Interacts with and stabilizes bases of the 16S rRNA that are involved in tRNA selection in the A site and with the mRNA backbone. Located at the interface of the 30S and 50S subunits, it traverses the body of the 30S subunit contacting proteins on the other side and probably holding the rRNA structure together. The combined cluster of proteins S8, S12 and S17 appears to hold together the shoulder and platform of the 30S subunit. This chain is Small ribosomal subunit protein uS12, found in Paraburkholderia xenovorans (strain LB400).